Consider the following 726-residue polypeptide: MSTSDDIHNTTATGKCPFHQGGHDQSAGAGTTTRDWWPNQLRVDLLNQHSNRSNPLGEDFDYRKEFSKLDYYGLKKDLKALLTESQPWWPADWGSYAGLFIRMAWHGAGTYRSIDGRGGAGRGQQRFAPLNSWPDNVSLDKARRLLWPIKQKYGQKISWADLFILAGNVALENSGFRTFGFGAGREDVWEPDLDVNWGDEKAWLTHRHPEALAKAPLGATEMGLIYVNPEGPDHSGEPLSAAAAIRATFGNMGMNDEETVALIAGGHTLGKTHGAGPTSNVGPDPEAAPIEEQGLGWASTYGSGVGADAITSGLEVVWTQTPTQWSNYFFENLFKYEWVQTRSPAGAIQFDAVDAPEIIPDPFDPSKKRKPTMLVTDLTLRFDPEFEKISRRFLNDPQAFNEAFARAWFKLTHRDMGPKSRYIGPEVPKEDLIWQDPLPQPIYNPTEQDIIDLKFAIADSGLSVSELVSVAWASASTFRGGDKRGGANGARLALMPQRDWDVNAAAVRALPVLEKIQKESGKASLADIIVLAGVVGVEKAASAAGLSIHVPFAPGRVDARQDQTDIEMFELLEPIADGFRNYRARLDVSTTESLLIDKAQQLTLTAPEMTALVGGMRVLGANFDSSKNGVFTDRVGVLSNDFFVNLLDMRYEWKATDESKELFEGRDRETGEVKYTASRADLVFGSNSVLRAVAEVYASSDAHEKFVKDFVAAWVKVMNLDRFDLL.

Residues 1–33 (MSTSDDIHNTTATGKCPFHQGGHDQSAGAGTTT) are disordered. Residues 105-226 (WHGAGTYRSI…LGATEMGLIY (122 aa)) constitute a cross-link (tryptophyl-tyrosyl-methioninium (Trp-Tyr) (with M-252)). Residue histidine 106 is the Proton acceptor of the active site. The segment at residues 226 to 252 (YVNPEGPDHSGEPLSAAAAIRATFGNM) is a cross-link (tryptophyl-tyrosyl-methioninium (Tyr-Met) (with W-105)). Histidine 267 lines the heme b pocket.

The protein belongs to the peroxidase family. Peroxidase/catalase subfamily. In terms of assembly, homodimer or homotetramer. The cofactor is heme b. Post-translationally, formation of the three residue Trp-Tyr-Met cross-link is important for the catalase, but not the peroxidase activity of the enzyme.

The catalysed reaction is H2O2 + AH2 = A + 2 H2O. It carries out the reaction 2 H2O2 = O2 + 2 H2O. Its function is as follows. Bifunctional enzyme with both catalase and broad-spectrum peroxidase activity. The chain is Catalase-peroxidase from Shigella boydii serotype 18 (strain CDC 3083-94 / BS512).